The sequence spans 396 residues: MQTFLKGKRVGYWMSEKKIKKLNFQAFADLCRKRGIEVVQLNLAKPIEDQGPLDVIIHKLTDVILEADQKDSESMQLVQRFQDYIEAHPETIILDPLPAIRTLLDRSKSYELIRRIETYMQDERICSPPFMELMAECDEDTLKILEKNGLAFPLVCKTRVAHGTNSHEMAIIFNPEGLWSIKPPCVIQSFISHNAVLYKVFVVGESYTVVERPSLKNFSLGASDRASIFFNSHNVSKPESSSVLTALEKVEGVFERPCDEVIRGISKALRQALGISLFGIDIIINNKTGQHAVIDINAFPGYEGVPEFFTDLLNHITTILQRPDQSANKSSVEQTGSSLGERLCCTPPARTDPWIVETDTSGSVKLQSQRLGCNSSVSPSFQQHCVASLATKASSQ.

1D-myo-inositol 1,3,4-trisphosphate is bound at residue lysine 18. Arginine 106 and lysine 157 together coordinate ATP. The ATP-grasp domain occupies 117 to 325; that stretch reads ETYMQDERIC…ITTILQRPDQ (209 aa). Residues histidine 167 and lysine 199 each coordinate 1D-myo-inositol 1,3,4-trisphosphate. ATP is bound by residues 188–199, serine 214, serine 232, and serine 236; that span reads QSFISHNAVLYK. Residues aspartate 281, aspartate 295, and asparagine 297 each coordinate Mg(2+). Asparagine 297 is a binding site for 1D-myo-inositol 1,3,4-trisphosphate.

It belongs to the ITPK1 family. Monomer. It depends on Mg(2+) as a cofactor.

The enzyme catalyses 1D-myo-inositol 3,4,5,6-tetrakisphosphate + ATP = 1D-myo-inositol 1,3,4,5,6-pentakisphosphate + ADP + H(+). The catalysed reaction is 1D-myo-inositol 1,3,4-trisphosphate + ATP = 1D-myo-inositol 1,3,4,5-tetrakisphosphate + ADP + H(+). It carries out the reaction 1D-myo-inositol 1,3,4-trisphosphate + ATP = 1D-myo-inositol 1,3,4,6-tetrakisphosphate + ADP + H(+). It catalyses the reaction 1D-myo-inositol 3,4,6-trisphosphate + ATP = 1D-myo-inositol 1,3,4,6-tetrakisphosphate + ADP + H(+). The enzyme catalyses 1D-myo-inositol 1,3,4-trisphosphate + 1D-myo-inositol 1,3,4,5,6-pentakisphosphate = 1D-myo-inositol 3,4,5,6-tetrakisphosphate + 1D-myo-inositol 1,3,4,6-tetrakisphosphate. The catalysed reaction is 1D-myo-inositol 1,3,4-trisphosphate + 1D-myo-inositol 1,3,4,5,6-pentakisphosphate = 1D-myo-inositol 3,4,5,6-tetrakisphosphate + 1D-myo-inositol 1,3,4,5-tetrakisphosphate. Its function is as follows. Kinase that can phosphorylate various inositol polyphosphate such as Ins(3,4,5,6)P4 or Ins(1,3,4)P3. Phosphorylates Ins(3,4,5,6)P4 at position 1 to form Ins(1,3,4,5,6)P5. This reaction is thought to have regulatory importance, since Ins(3,4,5,6)P4 is an inhibitor of plasma membrane Ca(2+)-activated Cl(-) channels, while Ins(1,3,4,5,6)P5 is not. Also phosphorylates Ins(1,3,4)P3 on O-5 and O-6 to form Ins(1,3,4,6)P4, an essential molecule in the hexakisphosphate (InsP6) pathway. Also acts as an inositol polyphosphate phosphatase that dephosphorylates Ins(1,3,4,5)P4 and Ins(1,3,4,6)P4 to Ins(1,3,4)P3, and Ins(1,3,4,5,6)P5 to Ins(3,4,5,6)P4. May also act as an isomerase that interconverts the inositol tetrakisphosphate isomers Ins(1,3,4,5)P4 and Ins(1,3,4,6)P4 in the presence of ADP and magnesium. Probably acts as the rate-limiting enzyme of the InsP6 pathway. Modifies TNF-alpha-induced apoptosis by interfering with the activation of TNFRSF1A-associated death domain. Plays an important role in MLKL-mediated necroptosis. Produces highly phosphorylated inositol phosphates such as inositolhexakisphosphate (InsP6) which bind to MLKL mediating the release of an N-terminal auto-inhibitory region leading to its activation. Essential for activated phospho-MLKL to oligomerize and localize to the cell membrane during necroptosis. This Xenopus laevis (African clawed frog) protein is Inositol-tetrakisphosphate 1-kinase (itpk1).